Consider the following 376-residue polypeptide: Chorismate synthase (376 aa).

Positions 39 and 45 each coordinate NADP(+). FMN contacts are provided by residues 115–117 (RSS), G276, 291–295 (KPIPT), and R317.

The protein belongs to the chorismate synthase family. As to quaternary structure, homotetramer. The cofactor is FMNH2.

It catalyses the reaction 5-O-(1-carboxyvinyl)-3-phosphoshikimate = chorismate + phosphate. Its pathway is metabolic intermediate biosynthesis; chorismate biosynthesis; chorismate from D-erythrose 4-phosphate and phosphoenolpyruvate: step 7/7. Its function is as follows. Catalyzes the anti-1,4-elimination of the C-3 phosphate and the C-6 proR hydrogen from 5-enolpyruvylshikimate-3-phosphate (EPSP) to yield chorismate, which is the branch point compound that serves as the starting substrate for the three terminal pathways of aromatic amino acid biosynthesis. This reaction introduces a second double bond into the aromatic ring system. This Thermotoga sp. (strain RQ2) protein is Chorismate synthase.